Here is a 223-residue protein sequence, read N- to C-terminus: N-terminal Xaa-Pro-Lys N-methyltransferase 1 (223 aa).

Methionine 1 is modified (N-acetylmethionine). Residue threonine 2 is modified to N-acetylthreonine; in N-terminal Xaa-Pro-Lys N-methyltransferase 1, N-terminally processed. S-adenosyl-L-methionine is bound by residues glycine 69, arginine 74, 91–93 (DIT), 119–120 (LQ), and glutamine 135.

It belongs to the methyltransferase superfamily. NTM1 family.

It is found in the nucleus. It carries out the reaction N-terminal L-alanyl-L-prolyl-L-lysyl-[protein] + 3 S-adenosyl-L-methionine = N-terminal N,N,N-trimethyl-L-alanyl-L-prolyl-L-lysyl-[protein] + 3 S-adenosyl-L-homocysteine + 3 H(+). It catalyses the reaction N-terminal L-seryl-L-prolyl-L-lysyl-[protein] + 3 S-adenosyl-L-methionine = N-terminal N,N,N-trimethyl-L-seryl-L-prolyl-L-lysyl-[protein] + 3 S-adenosyl-L-homocysteine + 3 H(+). The catalysed reaction is N-terminal L-prolyl-L-prolyl-L-lysyl-[protein] + 2 S-adenosyl-L-methionine = N-terminal N,N-dimethyl-L-prolyl-L-prolyl-L-lysyl-[protein] + 2 S-adenosyl-L-homocysteine + 2 H(+). Functionally, distributive alpha-N-methyltransferase that methylates the N-terminus of target proteins containing the N-terminal motif [Ala/Gly/Pro/Ser]-Pro-Lys when the initiator Met is cleaved. Specifically catalyzes mono-, di- or tri-methylation of the exposed alpha-amino group of the Ala, Gly or Ser residue in the [Ala/Gly/Ser]-Pro-Lys motif and mono- or di-methylation of Pro in the Pro-Pro-Lys motif. Some of the substrates may be primed by NTMT2-mediated monomethylation. Catalyzes the trimethylation of the N-terminal Gly in CENPA (after removal of Met-1). Responsible for the N-terminal methylation of KLHL31, MYL2, MYL3, RB1, RCC1, RPL23A and SET. Required during mitosis for normal bipolar spindle formation and chromosome segregation via its action on RCC1. In Homo sapiens (Human), this protein is N-terminal Xaa-Pro-Lys N-methyltransferase 1 (NTMT1).